Here is a 145-residue protein sequence, read N- to C-terminus: Protein X (145 aa).

Residues 68 to 117 (PCALRFTSARRMETTVNAHQVLPKVLHKRTLGLSAMSTTDLEAYFKDCVF) are mitochondrial targeting sequence.

Belongs to the orthohepadnavirus protein X family. In terms of assembly, may form homodimer. May interact with host CEBPA, CFLAR, CREB1, DDB1, E4F1, HBXIP, HSPD1/HSP60, NFKBIA, POLR2E and SMAD4. Interacts with host SMC5-SMC6 complex and induces its degradation. Interacts with host TRPC4AP; leading to prevent ubiquitination of TRPC4AP. Interacts with host PLSCR1; this interaction promotes ubiquitination and degradation of HBx and impairs HBx-mediated cell proliferation. A fraction may be phosphorylated in insect cells and HepG2 cells, a human hepatoblastoma cell line. Phosphorylated in vitro by host protein kinase C or mitogen-activated protein kinase. N-acetylated in insect cells.

The protein resides in the host cytoplasm. It localises to the host nucleus. It is found in the host mitochondrion. In terms of biological role, multifunctional protein that plays a role in silencing host antiviral defenses and promoting viral transcription. Does not seem to be essential for HBV infection. May be directly involved in development of cirrhosis and liver cancer (hepatocellular carcinoma). Most of cytosolic activities involve modulation of cytosolic calcium. The effect on apoptosis is controversial depending on the cell types in which the studies have been conducted. May induce apoptosis by localizing in mitochondria and causing loss of mitochondrial membrane potential. May also modulate apoptosis by binding host CFLAR, a key regulator of the death-inducing signaling complex (DISC). Promotes viral transcription by using the host E3 ubiquitin ligase DDB1 to target the SMC5-SMC6 complex to proteasomal degradation. This host complex would otherwise bind to viral episomal DNA, and prevents its transcription. Moderately stimulates transcription of many different viral and cellular transcription elements. Promoters and enhancers stimulated by HBx contain DNA binding sites for NF-kappa-B, AP-1, AP-2, c-EBP, ATF/CREB, or the calcium-activated factor NF-AT. In Homo sapiens (Human), this protein is Protein X.